The primary structure comprises 436 residues: GTPase Der (436 aa).

EngA-type G domains follow at residues 3 to 168 (PLVA…EEKS) and 177 to 352 (IRLA…EQRS). GTP contacts are provided by residues 9-16 (GRPNVGKS), 56-60 (DTGGY), 120-123 (NKVE), 183-190 (GRPNVGKS), 230-234 (DTAGL), and 295-298 (NKWD). Residues 353 to 436 (QQITTSDLNR…VPFSLRFMQK (84 aa)) enclose the KH-like domain.

This sequence belongs to the TRAFAC class TrmE-Era-EngA-EngB-Septin-like GTPase superfamily. EngA (Der) GTPase family. Associates with the 50S ribosomal subunit.

Functionally, GTPase that plays an essential role in the late steps of ribosome biogenesis. The polypeptide is GTPase Der (Prosthecochloris aestuarii (strain DSM 271 / SK 413)).